A 435-amino-acid polypeptide reads, in one-letter code: Cytidine monophosphate-N-acetylneuraminic acid hydroxylase (435 aa).

This sequence belongs to the CMP-Neu5Ac hydroxylase family. It depends on [2Fe-2S] cluster as a cofactor.

It localises to the cytoplasm. The enzyme catalyses CMP-N-acetyl-beta-neuraminate + 2 Fe(II)-[cytochrome b5] + O2 + 2 H(+) = CMP-N-glycoloyl-beta-neuraminate + 2 Fe(III)-[cytochrome b5] + H2O. It functions in the pathway amino-sugar metabolism; N-acetylneuraminate metabolism. Sialic acids are components of carbohydrate chains of glycoconjugates and are involved in cell-cell recognition and cell-pathogen interactions. Catalyzes the conversion of CMP-N-acetylneuraminic acid (CMP-Neu5Ac) into its hydroxylated derivative CMP-N-glycolylneuraminic acid (CMP-Neu5Gc), a sialic acid abundantly expressed at the surface of many cells. The protein is Cytidine monophosphate-N-acetylneuraminic acid hydroxylase of Sus scrofa (Pig).